The primary structure comprises 121 residues: Amelogenin (121 aa).

The segment at 1–121 (LHHQIIPVLS…DLPLEPWPAS (121 aa)) is disordered. 2 stretches are compositionally biased toward polar residues: residues 10 to 19 (SQHQTPTHAL) and 47 to 59 (HSVT…QSNL). Over residues 60-84 (PQPGQQPFQPQFPQKPTHRPIQPQA) the composition is skewed to low complexity. Positions 85-121 (PVHPMPPMPQPQLPPMFPLQPLPPLLPDLPLEPWPAS) are enriched in pro residues.

The protein belongs to the amelogenin family.

The protein resides in the secreted. Its subcellular location is the extracellular space. It localises to the extracellular matrix. Functionally, plays a role in the biomineralization of teeth. Seems to regulate the formation of crystallites during the secretory stage of tooth enamel development. Thought to play a major role in the structural organization and mineralization of developing enamel. In Tachyglossus aculeatus aculeatus (Southeast Australian short-beaked echidna), this protein is Amelogenin (AMEL).